A 178-amino-acid chain; its full sequence is Glutamyl-tRNA(Gln) amidotransferase subunit C, mitochondrial (178 aa).

Residues 1 to 31 (MFRHIFTLGPRSISAITVRSRRALSSTAKPV) constitute a mitochondrion transit peptide. Residues 26–67 (STAKPVSAPVTSDDRPNLDVKHLKHPTKVPQQPHKSDIDRRQ) form a disordered region. Residues 37–46 (SDDRPNLDVK) show a composition bias toward basic and acidic residues.

Belongs to the GatC family. In terms of assembly, subunit of the heterotrimeric GatCAB amidotransferase (AdT) complex, composed of A, B and C subunits.

The protein localises to the mitochondrion. It carries out the reaction L-glutamyl-tRNA(Gln) + L-glutamine + ATP + H2O = L-glutaminyl-tRNA(Gln) + L-glutamate + ADP + phosphate + H(+). Its function is as follows. Allows the formation of correctly charged Gln-tRNA(Gln) through the transamidation of misacylated Glu-tRNA(Gln) in the mitochondria. The reaction takes place in the presence of glutamine and ATP through an activated gamma-phospho-Glu-tRNA(Gln). The polypeptide is Glutamyl-tRNA(Gln) amidotransferase subunit C, mitochondrial (Aedes aegypti (Yellowfever mosquito)).